Consider the following 123-residue polypeptide: Small ribosomal subunit protein uS12c (123 aa).

Belongs to the universal ribosomal protein uS12 family. Part of the 30S ribosomal subunit.

It is found in the plastid. The protein resides in the chloroplast. Its function is as follows. With S4 and S5 plays an important role in translational accuracy. Located at the interface of the 30S and 50S subunits. The chain is Small ribosomal subunit protein uS12c (rps12) from Oenothera elata subsp. hookeri (Hooker's evening primrose).